The sequence spans 425 residues: O-methyltransferase AMT9 (425 aa).

Residues 257 to 258, Asp280, 306 to 307, Arg322, and Arg323 contribute to the S-adenosyl-L-methionine site; these read GG and DF. Catalysis depends on His326, which acts as the Proton acceptor.

The protein belongs to the class I-like SAM-binding methyltransferase superfamily. Cation-independent O-methyltransferase family.

It functions in the pathway mycotoxin biosynthesis. Its function is as follows. O-methyltransferase; part of the gene clusters that mediate the biosynthesis of AM-toxins, host-selective toxins (HSTs) causing Alternaria blotch on apple, a worldwide distributed disease. AM-toxins are cyclic depsipeptides containing the 3 residues 2-hydroxy-isovaleric acid (2-HIV), dehydroalanine, L-alanine which are common for all 3 AM-toxins I to III. The fourth precursor is L-alpha-amino-methoxyphenyl-valeric acid (L-Amv) for AM-toxin I, L-alpha-amino-phenyl-valeric acid (L-Apv) for AM-toxin II, and L-alpha-amino-hydroxyphenyl-valeric acid (L-Ahv) for AM-toxin III. AM-toxins have two target sites for affecting susceptible apple cells; they cause invagination of the plasma membrane and electrolyte loss and chloroplast disorganization. The non-ribosomal peptide synthetase AMT1 contains 4 catalytic modules and is responsible for activation of each residue in AM-toxin. The aldo-keto reductase AMT2 catalyzes the conversion of 2-keto-isovaleric acid (2-KIV) to 2-hydroxy-isovaleric acid (2-HIV), one of the precursor residues incorporated by AMT1 during AM-toxin biosynthesis, by reduction of its ketone to an alcohol. The cytochrome P450 monooxygenase AMT3 and the thioesterase AMT4 are also important for AM-toxin production, but their exact function within the AM-toxin biosynthesis are not known yet. Up to 21 proteins (including AMT1 to AMT4) are predicted to be involved in AM-toxin biosynthesis since their expression ishighly up-regulated in AM-toxin-producing cultures. The polypeptide is O-methyltransferase AMT9 (Alternaria alternata (Alternaria rot fungus)).